Reading from the N-terminus, the 351-residue chain is Ribonucleoside-diphosphate reductase subunit M2 B (351 aa).

Residues 1 to 31 are disordered; that stretch reads MGDPERPEAAGLDQDERSSSDTNENEIKSNE. Residues Asp100, Glu131, and His134 each coordinate Fe cation. The active site involves Tyr138. The Fe cation site is built by Glu194, Glu228, and His231.

This sequence belongs to the ribonucleoside diphosphate reductase small chain family. In terms of assembly, heterotetramer with large (RRM1) subunit. Interacts with p53/TP53. Interacts with RRM1 in response to DNA damage. Requires Fe cation as cofactor.

Its subcellular location is the cytoplasm. The protein resides in the nucleus. The enzyme catalyses a 2'-deoxyribonucleoside 5'-diphosphate + [thioredoxin]-disulfide + H2O = a ribonucleoside 5'-diphosphate + [thioredoxin]-dithiol. Functionally, plays a pivotal role in cell survival by repairing damaged DNA in a p53/TP53-dependent manner. Supplies deoxyribonucleotides for DNA repair in cells arrested at G1 or G2. Contains an iron-tyrosyl free radical center required for catalysis. Forms an active ribonucleotide reductase (RNR) complex with RRM1 which is expressed both in resting and proliferating cells in response to DNA damage. In Pongo abelii (Sumatran orangutan), this protein is Ribonucleoside-diphosphate reductase subunit M2 B (RRM2B).